The chain runs to 431 residues: tRNA(Ile)-lysidine synthase (431 aa).

Residue 25–30 coordinates ATP; that stretch reads SGGPDS.

The protein belongs to the tRNA(Ile)-lysidine synthase family.

Its subcellular location is the cytoplasm. The enzyme catalyses cytidine(34) in tRNA(Ile2) + L-lysine + ATP = lysidine(34) in tRNA(Ile2) + AMP + diphosphate + H(+). In terms of biological role, ligates lysine onto the cytidine present at position 34 of the AUA codon-specific tRNA(Ile) that contains the anticodon CAU, in an ATP-dependent manner. Cytidine is converted to lysidine, thus changing the amino acid specificity of the tRNA from methionine to isoleucine. This is tRNA(Ile)-lysidine synthase from Lactobacillus gasseri (strain ATCC 33323 / DSM 20243 / BCRC 14619 / CIP 102991 / JCM 1131 / KCTC 3163 / NCIMB 11718 / NCTC 13722 / AM63).